The sequence spans 162 residues: Nucleotide-binding protein ABSDF0503 (162 aa).

It belongs to the YajQ family.

Functionally, nucleotide-binding protein. This Acinetobacter baumannii (strain SDF) protein is Nucleotide-binding protein ABSDF0503.